Consider the following 495-residue polypeptide: Histidine--tRNA ligase (495 aa).

The protein belongs to the class-II aminoacyl-tRNA synthetase family. Homodimer.

Its subcellular location is the cytoplasm. The enzyme catalyses tRNA(His) + L-histidine + ATP = L-histidyl-tRNA(His) + AMP + diphosphate + H(+). This Ruegeria pomeroyi (strain ATCC 700808 / DSM 15171 / DSS-3) (Silicibacter pomeroyi) protein is Histidine--tRNA ligase.